The primary structure comprises 390 residues: Argininosuccinate synthase (390 aa).

Position 6-14 (6-14 (AYSGGLDTT)) interacts with ATP. Y84 lines the L-citrulline pocket. ATP is bound at residue G114. 3 residues coordinate L-aspartate: T116, N120, and D121. Residue N120 coordinates L-citrulline. L-citrulline-binding residues include R124, S171, S180, E253, and Y265.

The protein belongs to the argininosuccinate synthase family. Type 1 subfamily. In terms of assembly, homotetramer.

Its subcellular location is the cytoplasm. It catalyses the reaction L-citrulline + L-aspartate + ATP = 2-(N(omega)-L-arginino)succinate + AMP + diphosphate + H(+). The protein operates within amino-acid biosynthesis; L-arginine biosynthesis; L-arginine from L-ornithine and carbamoyl phosphate: step 2/3. The sequence is that of Argininosuccinate synthase from Sulfurisphaera tokodaii (strain DSM 16993 / JCM 10545 / NBRC 100140 / 7) (Sulfolobus tokodaii).